The chain runs to 403 residues: Glyceraldehyde-3-phosphate dehydrogenase A, chloroplastic (403 aa).

Residues 1–66 constitute a chloroplast transit peptide; that stretch reads MASSMLSATT…GGPRRAPTEA (66 aa). Residues 77–78, Asp-102, and Arg-147 contribute to the NADP(+) site; that span reads RI. Residues 219–221, Thr-250, Arg-265, 278–279, and Arg-301 contribute to the D-glyceraldehyde 3-phosphate site; these read SCT and TG. Cys-220 acts as the Nucleophile in catalysis. Residue Asn-383 participates in NADP(+) binding.

It belongs to the glyceraldehyde-3-phosphate dehydrogenase family. In terms of assembly, tetramer of either four A chains (GAPDH 2) or two A and two B chains (GAPDH 1).

It is found in the plastid. Its subcellular location is the chloroplast. It catalyses the reaction D-glyceraldehyde 3-phosphate + phosphate + NADP(+) = (2R)-3-phospho-glyceroyl phosphate + NADPH + H(+). Its pathway is carbohydrate biosynthesis; Calvin cycle. The polypeptide is Glyceraldehyde-3-phosphate dehydrogenase A, chloroplastic (GAPA) (Zea mays (Maize)).